The primary structure comprises 463 residues: Chitobiosyldiphosphodolichol beta-mannosyltransferase (463 aa).

Residues M1 to A3 are Lumenal-facing. The chain crosses the membrane as a helical span at residues W4–L24. The Cytoplasmic portion of the chain corresponds to T25–P105. Positions F106 to Y126 form an intramembrane region, helical. The Lumenal portion of the chain corresponds to K127–H463.

Belongs to the glycosyltransferase group 1 family.

The protein resides in the endoplasmic reticulum membrane. It carries out the reaction an N,N'-diacetylchitobiosyl-diphospho-di-trans,poly-cis-dolichol + GDP-alpha-D-mannose = a beta-D-Man-(1-&gt;4)-beta-D-GlcNAc-(1-&gt;4)-alpha-D-GlcNAc-diphospho-di-trans,poly-cis-dolichol + GDP + H(+). Its pathway is protein modification; protein glycosylation. In terms of biological role, participates in the formation of the lipid-linked precursor oligosaccharide for N-glycosylation. Involved in assembling the dolichol-pyrophosphate-GlcNAc(2)-Man(5) intermediate on the cytoplasmic surface of the ER. The sequence is that of Chitobiosyldiphosphodolichol beta-mannosyltransferase (ALG1) from Yarrowia lipolytica (strain CLIB 122 / E 150) (Yeast).